Reading from the N-terminus, the 1173-residue chain is Pyruvate-flavodoxin oxidoreductase (1173 aa).

4Fe-4S ferredoxin-type domains are found at residues 681–710 (NVPV…PVLI) and 735–766 (YRLA…MQPL). Cys690, Cys693, Cys696, Cys700, Cys744, Cys747, Cys750, Cys754, Cys810, Cys813, and Cys838 together coordinate [4Fe-4S] cluster. A compositionally biased stretch (basic and acidic residues) spans 922-933 (GEGTRERAEKVG). The interval 922-946 (GEGTRERAEKVGDTSGFANAREKSR) is disordered. Cys1075 provides a ligand contact to [4Fe-4S] cluster.

The protein belongs to the pyruvate:ferredoxin/flavodoxin oxidoreductase family. [4Fe-4S] cluster serves as cofactor.

It carries out the reaction oxidized [flavodoxin] + pyruvate + CoA + 2 H(+) = reduced [flavodoxin] + acetyl-CoA + CO2. Its function is as follows. Oxidoreductase required for the transfer of electrons from pyruvate to flavodoxin, which reduces nitrogenase. This Enterobacter agglomerans (Erwinia herbicola) protein is Pyruvate-flavodoxin oxidoreductase (nifJ).